The primary structure comprises 283 residues: ATP phosphoribosyltransferase (283 aa).

The protein belongs to the ATP phosphoribosyltransferase family. Long subfamily. Mg(2+) is required as a cofactor.

It localises to the cytoplasm. It carries out the reaction 1-(5-phospho-beta-D-ribosyl)-ATP + diphosphate = 5-phospho-alpha-D-ribose 1-diphosphate + ATP. It participates in amino-acid biosynthesis; L-histidine biosynthesis; L-histidine from 5-phospho-alpha-D-ribose 1-diphosphate: step 1/9. With respect to regulation, feedback inhibited by histidine. Catalyzes the condensation of ATP and 5-phosphoribose 1-diphosphate to form N'-(5'-phosphoribosyl)-ATP (PR-ATP). Has a crucial role in the pathway because the rate of histidine biosynthesis seems to be controlled primarily by regulation of HisG enzymatic activity. This is ATP phosphoribosyltransferase from Bifidobacterium longum subsp. infantis (strain ATCC 15697 / DSM 20088 / JCM 1222 / NCTC 11817 / S12).